We begin with the raw amino-acid sequence, 342 residues long: Protease HtpX homolog (342 aa).

2 helical membrane passes run 6–26 and 28–48; these read TAML…LIGG and GGMM…YWNS. Residue histidine 130 coordinates Zn(2+). Glutamate 131 is an active-site residue. A Zn(2+)-binding site is contributed by histidine 134. The next 2 helical transmembrane spans lie at 145-165 and 173-193; these read ITAT…FFGG and GGGI…AMLV. Glutamate 202 lines the Zn(2+) pocket. Positions 290-342 are disordered; the sequence is PQHSKPAASGPWGSSAERSTDDPWGVKGGASTRSVPKIGRRGKDNDAPKGPWN.

Belongs to the peptidase M48B family. The cofactor is Zn(2+).

It is found in the cell inner membrane. The protein is Protease HtpX homolog of Allorhizobium ampelinum (strain ATCC BAA-846 / DSM 112012 / S4) (Agrobacterium vitis (strain S4)).